Here is a 335-residue protein sequence, read N- to C-terminus: Biotin synthase (335 aa).

Positions 1 to 20 are disordered; sequence MVSVGTQSHSGRDQAEQNPS. The Radical SAM core domain occupies 59-284; that stretch reads GHLQKSSLLS…MMPQSMVRLS (226 aa). The [4Fe-4S] cluster site is built by Cys74, Cys78, and Cys81. Cys118, Cys150, Cys210, and Arg282 together coordinate [2Fe-2S] cluster.

The protein belongs to the radical SAM superfamily. Biotin synthase family. Homodimer. It depends on [4Fe-4S] cluster as a cofactor. [2Fe-2S] cluster is required as a cofactor.

It catalyses the reaction (4R,5S)-dethiobiotin + (sulfur carrier)-SH + 2 reduced [2Fe-2S]-[ferredoxin] + 2 S-adenosyl-L-methionine = (sulfur carrier)-H + biotin + 2 5'-deoxyadenosine + 2 L-methionine + 2 oxidized [2Fe-2S]-[ferredoxin]. It participates in cofactor biosynthesis; biotin biosynthesis; biotin from 7,8-diaminononanoate: step 2/2. Its function is as follows. Catalyzes the conversion of dethiobiotin (DTB) to biotin by the insertion of a sulfur atom into dethiobiotin via a radical-based mechanism. This Zymomonas mobilis subsp. mobilis (strain ATCC 31821 / ZM4 / CP4) protein is Biotin synthase.